A 549-amino-acid chain; its full sequence is Chaperonin GroEL 2 (549 aa).

ATP-binding positions include 29 to 32 (TLGP), Lys-50, 86 to 90 (DGTTT), Gly-414, 477 to 479 (NAA), and Asp-493.

The protein belongs to the chaperonin (HSP60) family. Forms a cylinder of 14 subunits composed of two heptameric rings stacked back-to-back. Interacts with the co-chaperonin GroES.

It localises to the cytoplasm. The catalysed reaction is ATP + H2O + a folded polypeptide = ADP + phosphate + an unfolded polypeptide.. In terms of biological role, together with its co-chaperonin GroES, plays an essential role in assisting protein folding. The GroEL-GroES system forms a nano-cage that allows encapsulation of the non-native substrate proteins and provides a physical environment optimized to promote and accelerate protein folding. The polypeptide is Chaperonin GroEL 2 (Myxococcus xanthus (strain DK1622)).